Here is a 168-residue protein sequence, read N- to C-terminus: Chemoreceptor glutamine deamidase CheD (168 aa).

The protein belongs to the CheD family. As to quaternary structure, forms a complex with CheC.

It carries out the reaction L-glutaminyl-[protein] + H2O = L-glutamyl-[protein] + NH4(+). Functionally, deamidates glutamine residues to glutamate on methyl-accepting chemotaxis receptors (MCPs). CheD-mediated MCP deamidation is required for productive communication of the conformational signals of the chemoreceptors to the CheA kinase. The polypeptide is Chemoreceptor glutamine deamidase CheD (Bacillus licheniformis (strain ATCC 14580 / DSM 13 / JCM 2505 / CCUG 7422 / NBRC 12200 / NCIMB 9375 / NCTC 10341 / NRRL NRS-1264 / Gibson 46)).